The primary structure comprises 367 residues: Glutamate 5-kinase (367 aa).

K10 contacts ATP. The substrate site is built by S50, D137, and N149. ATP-binding positions include 169–170 (TD) and 211–217 (TGGMGTK). Positions 275 to 353 (AGEITVDDGA…QEISEILGYE (79 aa)) constitute a PUA domain.

The protein belongs to the glutamate 5-kinase family.

The protein resides in the cytoplasm. The enzyme catalyses L-glutamate + ATP = L-glutamyl 5-phosphate + ADP. The protein operates within amino-acid biosynthesis; L-proline biosynthesis; L-glutamate 5-semialdehyde from L-glutamate: step 1/2. In terms of biological role, catalyzes the transfer of a phosphate group to glutamate to form L-glutamate 5-phosphate. This is Glutamate 5-kinase from Serratia proteamaculans (strain 568).